The sequence spans 142 residues: Large ribosomal subunit protein uL11 (142 aa).

This sequence belongs to the universal ribosomal protein uL11 family. As to quaternary structure, part of the ribosomal stalk of the 50S ribosomal subunit. Interacts with L10 and the large rRNA to form the base of the stalk. L10 forms an elongated spine to which L12 dimers bind in a sequential fashion forming a multimeric L10(L12)X complex. In terms of processing, one or more lysine residues are methylated.

In terms of biological role, forms part of the ribosomal stalk which helps the ribosome interact with GTP-bound translation factors. The polypeptide is Large ribosomal subunit protein uL11 (Shewanella sp. (strain ANA-3)).